The following is a 527-amino-acid chain: Tyrosine--tRNA ligase, cytoplasmic (527 aa).

An L-tyrosine-binding site is contributed by Y39. The 'HIGH' region signature appears at 44 to 52; the sequence is TTGKPHVAY. L-tyrosine contacts are provided by Y166, Q170, D173, and Q188. Residues 222-226 carry the 'KMSKS' region motif; sequence KMSSS. The short motif at 242–247 is the Nuclear localization signal element; the sequence is KKKLKK. The interval 337-362 is disordered; sequence TNAAYPNPSKAKPAEKGTKNSEPETI. Over residues 348–358 the composition is skewed to basic and acidic residues; that stretch reads KPAEKGTKNSE. Residues 363–467 enclose the tRNA-binding domain; the sequence is VPSRLDIRVG…AECCAGERVY (105 aa).

The protein belongs to the class-I aminoacyl-tRNA synthetase family. Homodimer.

The protein localises to the cytoplasm. Its subcellular location is the nucleus. It carries out the reaction tRNA(Tyr) + L-tyrosine + ATP = L-tyrosyl-tRNA(Tyr) + AMP + diphosphate + H(+). In terms of biological role, catalyzes the attachment of tyrosine to tRNA(Tyr) in a two-step reaction: tyrosine is first activated by ATP to form Tyr-AMP and then transferred to the acceptor end of tRNA(Tyr). This is Tyrosine--tRNA ligase, cytoplasmic (YARS1) from Gallus gallus (Chicken).